We begin with the raw amino-acid sequence, 242 residues long: Argininosuccinate synthase (242 aa).

This sequence belongs to the argininosuccinate synthase family. Type 2 subfamily. Homotetramer.

It localises to the cytoplasm. It catalyses the reaction L-citrulline + L-aspartate + ATP = 2-(N(omega)-L-arginino)succinate + AMP + diphosphate + H(+). The protein operates within amino-acid biosynthesis; L-arginine biosynthesis; L-arginine from L-ornithine and carbamoyl phosphate: step 2/3. The chain is Argininosuccinate synthase (argG) from Dickeya chrysanthemi (Pectobacterium chrysanthemi).